We begin with the raw amino-acid sequence, 393 residues long: Pre-mRNA splicing factor SR-like 1 (393 aa).

A disordered region spans residues M173–R393. The segment covering Q249 to R312 has biased composition (basic and acidic residues). Residues S301–D308 carry the Nuclear localization signal motif. A compositionally biased stretch (basic residues) spans H313 to S325. 2 stretches are compositionally biased toward basic and acidic residues: residues Q329–S346 and K356–I385.

It belongs to the PRP38 family. Phosphorylated. In terms of tissue distribution, mostly expressed in siliques and leaves, also present in seedlings, flowers and stems, and, at low levels, in roots.

The protein resides in the nucleus. Its function is as follows. May be required for pre-mRNA splicing. Confers salt tolerance to LiCl and NaCl. The sequence is that of Pre-mRNA splicing factor SR-like 1 from Arabidopsis thaliana (Mouse-ear cress).